Consider the following 232-residue polypeptide: Ubiquinone biosynthesis O-methyltransferase (232 aa).

The S-adenosyl-L-methionine site is built by Arg-36, Gly-55, Asp-76, and Leu-120.

It belongs to the methyltransferase superfamily. UbiG/COQ3 family.

The catalysed reaction is a 3-demethylubiquinol + S-adenosyl-L-methionine = a ubiquinol + S-adenosyl-L-homocysteine + H(+). The enzyme catalyses a 3-(all-trans-polyprenyl)benzene-1,2-diol + S-adenosyl-L-methionine = a 2-methoxy-6-(all-trans-polyprenyl)phenol + S-adenosyl-L-homocysteine + H(+). It functions in the pathway cofactor biosynthesis; ubiquinone biosynthesis. Its function is as follows. O-methyltransferase that catalyzes the 2 O-methylation steps in the ubiquinone biosynthetic pathway. The polypeptide is Ubiquinone biosynthesis O-methyltransferase (Pseudomonas savastanoi pv. phaseolicola (strain 1448A / Race 6) (Pseudomonas syringae pv. phaseolicola (strain 1448A / Race 6))).